The sequence spans 659 residues: Anoctamin-10 (659 aa).

The Cytoplasmic portion of the chain corresponds to 1–207; the sequence is MRVTLSTLDT…DSIRSYFGET (207 aa). Residues 208–228 form a helical membrane-spanning segment; sequence IALYFGFLEYFTFALIPMAII. Topologically, residues 229 to 240 are extracellular; the sequence is GLPYYLFVWEDY. The helical transmembrane segment at 241 to 261 threads the bilayer; it reads DKYVIFASFNLIWSTVILEVW. Residues 262–316 lie on the Cytoplasmic side of the membrane; it reads KRGCANMTYRWGTLVMKRQFEEPRPGFHGVLGINSVTGREEPLYSSYKRQLRIYL. A helical membrane pass occupies residues 317–337; that stretch reads VSLPFVCLCLYFSLYVMMIYF. Residues 338–352 lie on the Extracellular side of the membrane; it reads DMEDWALSLHEDSGS. Residues 353–373 form a helical membrane-spanning segment; it reads EWTSLLLYVPSIVYAVVIEIM. Residues 374–400 are Cytoplasmic-facing; that stretch reads NRLYRYAAEFLTSWENHRLESAYQNHL. A helical membrane pass occupies residues 401-421; it reads VLKVLVFNFLNCFASLFYIAF. Residues 422 to 500 lie on the Extracellular side of the membrane; that stretch reads VLKDMKLLRQ…YLGTFDDYLE (79 aa). The chain crosses the membrane as a helical span at residues 501 to 521; sequence LFLQFGYVSLFSCVYPLAAAF. Over 522–553 the chain is Cytoplasmic; it reads AVLNNFTEVNSDALKMCRVFKRPFAEPSASIG. A helical transmembrane segment spans residues 554–574; sequence VWQLAFETMSVISVVTNCALI. Topologically, residues 575–590 are extracellular; it reads GMSPQVNAVFPESKTD. A helical transmembrane segment spans residues 591–611; it reads LVLIVVAVEHALLALKFILAF. Residues 612-659 lie on the Cytoplasmic side of the membrane; it reads AIPDKPRHIQQKLARLEFESLEALKQQQMKLVAENLKEEYQEDGKEAT.

It belongs to the anoctamin family. As to expression, predominant expression seen in epithelial tissues.

It is found in the cell membrane. Functionally, does not exhibit calcium-activated chloride channel (CaCC) activity. Can inhibit the activity of ANO1. The polypeptide is Anoctamin-10 (Ano10) (Mus musculus (Mouse)).